The following is a 273-amino-acid chain: Dermonecrotic toxin LarSicTox-alphaIB1aii (273 aa).

Residue His5 is part of the active site. Mg(2+) contacts are provided by Glu25 and Asp27. His41 acts as the Nucleophile in catalysis. 2 disulfide bridges follow: Cys45-Cys51 and Cys47-Cys190. Residue Asp85 coordinates Mg(2+). Asn250 carries N-linked (GlcNAc...) asparagine glycosylation.

This sequence belongs to the arthropod phospholipase D family. Class II subfamily. Mg(2+) is required as a cofactor. As to expression, expressed by the venom gland.

The protein localises to the secreted. It carries out the reaction an N-(acyl)-sphingosylphosphocholine = an N-(acyl)-sphingosyl-1,3-cyclic phosphate + choline. The catalysed reaction is an N-(acyl)-sphingosylphosphoethanolamine = an N-(acyl)-sphingosyl-1,3-cyclic phosphate + ethanolamine. The enzyme catalyses a 1-acyl-sn-glycero-3-phosphocholine = a 1-acyl-sn-glycero-2,3-cyclic phosphate + choline. It catalyses the reaction a 1-acyl-sn-glycero-3-phosphoethanolamine = a 1-acyl-sn-glycero-2,3-cyclic phosphate + ethanolamine. Dermonecrotic toxins cleave the phosphodiester linkage between the phosphate and headgroup of certain phospholipids (sphingolipid and lysolipid substrates), forming an alcohol (often choline) and a cyclic phosphate. This toxin acts on sphingomyelin (SM). It may also act on ceramide phosphoethanolamine (CPE), lysophosphatidylcholine (LPC) and lysophosphatidylethanolamine (LPE), but not on lysophosphatidylserine (LPS), and lysophosphatidylglycerol (LPG). It acts by transphosphatidylation, releasing exclusively cyclic phosphate products as second products. Induces dermonecrosis, hemolysis, increased vascular permeability, edema, inflammatory response, and platelet aggregation. This chain is Dermonecrotic toxin LarSicTox-alphaIB1aii, found in Loxosceles arizonica (Arizona brown spider).